The primary structure comprises 381 residues: Flap endonuclease 1 (381 aa).

Residues 1 to 105 (MGIKGLNSII…HELDKRTSRR (105 aa)) are N-domain. Residue Asp34 participates in Mg(2+) binding. Residues Arg47 and Arg71 each contribute to the DNA site. Residues Asp87, Glu156, Glu158, Asp177, and Asp179 each coordinate Mg(2+). An I-domain region spans residues 120 to 251 (EKMKHERRLV…VTALKLMKEH (132 aa)). Glu156 contributes to the DNA binding site. DNA-binding residues include Gly229 and Asp231. Asp231 provides a ligand contact to Mg(2+). The segment at 338 to 346 (VQGRLDGFF) is interaction with PCNA.

This sequence belongs to the XPG/RAD2 endonuclease family. FEN1 subfamily. As to quaternary structure, interacts with PCNA. Three molecules of FEN1 bind to one PCNA trimer with each molecule binding to one PCNA monomer. PCNA stimulates the nuclease activity without altering cleavage specificity. Mg(2+) is required as a cofactor. In terms of processing, phosphorylated. Phosphorylation upon DNA damage induces relocalization to the nuclear plasma.

The protein localises to the nucleus. It is found in the nucleolus. The protein resides in the nucleoplasm. Its subcellular location is the mitochondrion. Its function is as follows. Structure-specific nuclease with 5'-flap endonuclease and 5'-3' exonuclease activities involved in DNA replication and repair. During DNA replication, cleaves the 5'-overhanging flap structure that is generated by displacement synthesis when DNA polymerase encounters the 5'-end of a downstream Okazaki fragment. It enters the flap from the 5'-end and then tracks to cleave the flap base, leaving a nick for ligation. Also involved in the long patch base excision repair (LP-BER) pathway, by cleaving within the apurinic/apyrimidinic (AP) site-terminated flap. Acts as a genome stabilization factor that prevents flaps from equilibrating into structures that lead to duplications and deletions. Also possesses 5'-3' exonuclease activity on nicked or gapped double-stranded DNA, and exhibits RNase H activity. Also involved in replication and repair of rDNA and in repairing mitochondrial DNA. In Candida glabrata (strain ATCC 2001 / BCRC 20586 / JCM 3761 / NBRC 0622 / NRRL Y-65 / CBS 138) (Yeast), this protein is Flap endonuclease 1.